Consider the following 188-residue polypeptide: dCTP deaminase (188 aa).

DCTP contacts are provided by residues 111-116 (KSTYAR), 135-137 (TLE), Gln156, Tyr170, and Gln180. Glu137 serves as the catalytic Proton donor/acceptor.

It belongs to the dCTP deaminase family. As to quaternary structure, homotrimer.

It catalyses the reaction dCTP + H2O + H(+) = dUTP + NH4(+). It participates in pyrimidine metabolism; dUMP biosynthesis; dUMP from dCTP (dUTP route): step 1/2. In terms of biological role, catalyzes the deamination of dCTP to dUTP. In Pseudomonas putida (strain GB-1), this protein is dCTP deaminase.